The chain runs to 163 residues: MYISKQPFRKSKQPFRKSKQTFHKSKQPFRKFKQPFRKSKQPFRRRSRIGPGDRIDYRNMSLINRFISEQGKILSRRINRLTLKQQRLITVAIKQARILSFLPFRNYENEKQFQAQAISIITGPRHRKNRHIPQLTQKFNSNRNLRNSNQNLRNNNRNLSSDC.

Disordered stretches follow at residues 1 to 52 (MYIS…IGPG) and 144 to 163 (NLRNSNQNLRNNNRNLSSDC). Basic residues predominate over residues 7–48 (PFRKSKQPFRKSKQTFHKSKQPFRKFKQPFRKSKQPFRRRSR).

Belongs to the bacterial ribosomal protein bS18 family. In terms of assembly, part of the 30S ribosomal subunit.

The protein localises to the plastid. Its subcellular location is the chloroplast. The polypeptide is Small ribosomal subunit protein bS18c (Sorghum bicolor (Sorghum)).